Here is a 542-residue protein sequence, read N- to C-terminus: Glucose-6-phosphate isomerase (542 aa).

Residue glutamate 354 is the Proton donor of the active site. Residues histidine 385 and lysine 505 contribute to the active site.

The protein belongs to the GPI family.

It is found in the cytoplasm. It catalyses the reaction alpha-D-glucose 6-phosphate = beta-D-fructose 6-phosphate. It participates in carbohydrate biosynthesis; gluconeogenesis. It functions in the pathway carbohydrate degradation; glycolysis; D-glyceraldehyde 3-phosphate and glycerone phosphate from D-glucose: step 2/4. Functionally, catalyzes the reversible isomerization of glucose-6-phosphate to fructose-6-phosphate. The protein is Glucose-6-phosphate isomerase of Nitrosospira multiformis (strain ATCC 25196 / NCIMB 11849 / C 71).